The chain runs to 382 residues: Secreted triacylglycerol lipase LIP5 (382 aa).

A disulfide bond links Cys40 and Cys211. N-linked (GlcNAc...) asparagine glycosylation occurs at Asn115. Catalysis depends on Ser124, which acts as the Nucleophile. Asn157 and Asn232 each carry an N-linked (GlcNAc...) asparagine glycan. Active-site residues include Asp271 and His305. The N-linked (GlcNAc...) asparagine glycan is linked to Asn346.

Belongs to the AB hydrolase superfamily. Lipase family. Class Lip subfamily.

It is found in the secreted. It carries out the reaction a triacylglycerol + H2O = a diacylglycerol + a fatty acid + H(+). It catalyses the reaction a monoacylglycerol + H2O = glycerol + a fatty acid + H(+). The catalysed reaction is a diacylglycerol + H2O = a monoacylglycerol + a fatty acid + H(+). Functionally, secreted lipase that hydrolyzes acylglycerol lipids such as triacylglycerols and consequently releases free fatty acid. Can hydrolyze 4-nitrophenyl palmitate to release 4-nitrophenol and palmitoic acid. Due to an absence of fatty acid synthase genes in Malassezia species, secretory lipases are essential for the yeast to generate free fatty acids from degradation of sebum and assimilate them as lipid sources for growth. Plays important roles not only in lipid metabolism but also in the immune response of host cells and pathogenesis. This Malassezia furfur (Pityriasis versicolor infection agent) protein is Secreted triacylglycerol lipase LIP5.